Consider the following 445-residue polypeptide: tRNA-2-methylthio-N(6)-dimethylallyladenosine synthase (445 aa).

One can recognise an MTTase N-terminal domain in the interval 2-117; the sequence is QGLYIKSYGC…LPELIVKARK (116 aa). [4Fe-4S] cluster is bound by residues Cys11, Cys47, Cys80, Cys157, Cys161, and Cys164. One can recognise a Radical SAM core domain in the interval 143-374; the sequence is KNQKVSAFIS…QELVHKQQLE (232 aa). The TRAM domain maps to 377 to 441; it reads KKMIGETHPV…KNHLTGIIPH (65 aa).

Belongs to the methylthiotransferase family. MiaB subfamily. As to quaternary structure, monomer. [4Fe-4S] cluster is required as a cofactor.

It localises to the cytoplasm. The catalysed reaction is N(6)-dimethylallyladenosine(37) in tRNA + (sulfur carrier)-SH + AH2 + 2 S-adenosyl-L-methionine = 2-methylsulfanyl-N(6)-dimethylallyladenosine(37) in tRNA + (sulfur carrier)-H + 5'-deoxyadenosine + L-methionine + A + S-adenosyl-L-homocysteine + 2 H(+). Catalyzes the methylthiolation of N6-(dimethylallyl)adenosine (i(6)A), leading to the formation of 2-methylthio-N6-(dimethylallyl)adenosine (ms(2)i(6)A) at position 37 in tRNAs that read codons beginning with uridine. The polypeptide is tRNA-2-methylthio-N(6)-dimethylallyladenosine synthase (Ehrlichia ruminantium (strain Gardel)).